The following is a 352-amino-acid chain: MQVSDFHFELPDELIARYPKAERTASRLLQLDGNSGQLVDGTFKDVLELVEPGDLLVFNNTRVIPARMFGRKASGGKLEVLVERMLDEHTILAHVRSSKPPKPGTELYLGENDEFHAVMQARHDALFEIRFTAETVVLDILNQIGHMPLPPYIDRPDEEADKERYQTVYNQKPGAVAAPTAGLHFDQALLEQIQAKGVELAYVTLHVGAGTFQPVRVENIHDHHMHAEYVEVPQEVVDAITATKARGGRVVAVGTTSVRSLESAAQDALQKGTELKPFFGDTEIFIFPGYQYQLVDCLITNFHLPESTLIMLVSAFAGYEHTMAAYEHAVKEQYRFFSYGDAMFIRKQMTKA.

This sequence belongs to the QueA family. As to quaternary structure, monomer.

Its subcellular location is the cytoplasm. It carries out the reaction 7-aminomethyl-7-carbaguanosine(34) in tRNA + S-adenosyl-L-methionine = epoxyqueuosine(34) in tRNA + adenine + L-methionine + 2 H(+). It functions in the pathway tRNA modification; tRNA-queuosine biosynthesis. In terms of biological role, transfers and isomerizes the ribose moiety from AdoMet to the 7-aminomethyl group of 7-deazaguanine (preQ1-tRNA) to give epoxyqueuosine (oQ-tRNA). This Vibrio cholerae serotype O1 (strain ATCC 39315 / El Tor Inaba N16961) protein is S-adenosylmethionine:tRNA ribosyltransferase-isomerase.